The chain runs to 256 residues: Pimeloyl-[acyl-carrier protein] methyl ester esterase (256 aa).

An AB hydrolase-1 domain is found at 15–242 (HLVLLHGWGL…AAHAPFISHP (228 aa)). Residues tryptophan 22, 82-83 (SL), and 143-147 (FLALQ) each bind substrate. The Nucleophile role is filled by serine 82. Residues aspartate 207 and histidine 235 contribute to the active site. Histidine 235 is a binding site for substrate.

Belongs to the AB hydrolase superfamily. Carboxylesterase BioH family. In terms of assembly, monomer.

It is found in the cytoplasm. The catalysed reaction is 6-carboxyhexanoyl-[ACP] methyl ester + H2O = 6-carboxyhexanoyl-[ACP] + methanol + H(+). It functions in the pathway cofactor biosynthesis; biotin biosynthesis. The physiological role of BioH is to remove the methyl group introduced by BioC when the pimeloyl moiety is complete. It allows to synthesize pimeloyl-ACP via the fatty acid synthetic pathway through the hydrolysis of the ester bonds of pimeloyl-ACP esters. The protein is Pimeloyl-[acyl-carrier protein] methyl ester esterase of Salmonella newport (strain SL254).